Consider the following 131-residue polypeptide: Large ribosomal subunit protein bL19 (131 aa).

Residues 112-131 (KSARIAERAGGPKASASTEA) are disordered.

Belongs to the bacterial ribosomal protein bL19 family.

This protein is located at the 30S-50S ribosomal subunit interface and may play a role in the structure and function of the aminoacyl-tRNA binding site. This is Large ribosomal subunit protein bL19 from Caulobacter vibrioides (strain ATCC 19089 / CIP 103742 / CB 15) (Caulobacter crescentus).